A 70-amino-acid polypeptide reads, in one-letter code: Ribosome modulation factor (70 aa).

The protein belongs to the ribosome modulation factor family.

Its subcellular location is the cytoplasm. Its function is as follows. During stationary phase, converts 70S ribosomes to an inactive dimeric form (100S ribosomes). This chain is Ribosome modulation factor, found in Marinobacter adhaerens (strain DSM 23420 / HP15).